Here is a 372-residue protein sequence, read N- to C-terminus: Solute carrier family 35 member F6 (372 aa).

The N-terminal stretch at 1–18 is a signal peptide; it reads MAWTKYQLFLAGLMLVTG. 2 helical membrane-spanning segments follow: residues 48–68 and 89–109; these read FVQAVGMFLGEFSCLAAFYLL and LLFLPPALCDMTGTSIMYVAL. The EamA domain maps to 105–160; it reads MYVALNMTSASSFQMLRGAVIIFTGLFSVAFLDRRLAPSQWLGILITIAGLVVVGL. A glycan (N-linked (GlcNAc...) asparagine) is linked at N110. Helical transmembrane passes span 116–136, 145–165, 176–196, 211–231, 261–281, 293–312, and 320–336; these read SFQMLRGAVIIFTGLFSVAFL, WLGILITIAGLVVVGLADLLS, VITGDLLIIMAQIIIAIQMVL, AVGIEGFFGFVILSLLLVPMF, LIALALLGNISSIAFFNFSGI, MVLDTLRTIVIWAFTLALGW, and ILGFLILLMGTALYNGL. T366 is modified (phosphothreonine).

The protein belongs to the SLC35F solute transporter family. As to quaternary structure, interacts with SLC25A5.

Its subcellular location is the mitochondrion. It is found in the lysosome membrane. Its function is as follows. Involved in the maintenance of mitochondrial membrane potential in pancreatic ductal adenocarcinoma (PDAC) cells. Promotes pancreatic ductal adenocarcinoma (PDAC) cell growth. May play a role as a nucleotide-sugar transporter. This is Solute carrier family 35 member F6 (Slc35f6) from Mus musculus (Mouse).